Reading from the N-terminus, the 263-residue chain is Protein PYRICULARIA ORYZAE RESISTANCE 21 (263 aa).

The region spanning 1 to 68 (MGILVISVDL…IWCKAGKIIK (68 aa)) is the HMA domain. The a metal cation site is built by Cys12 and Cys15. A disordered region spans residues 126–153 (CEKPKPCEKPPPCKPEEPPKPPPEKPPP). Over residues 139–153 (KPEEPPKPPPEKPPP) the composition is skewed to basic and acidic residues.

Its function is as follows. Involved in defense responses. Contributes to slowing defense responses toward Magnaporthe oryzae. This Oryza sativa subsp. indica (Rice) protein is Protein PYRICULARIA ORYZAE RESISTANCE 21.